A 151-amino-acid chain; its full sequence is Large ribosomal subunit protein bL9 (151 aa).

Belongs to the bacterial ribosomal protein bL9 family.

Functionally, binds to the 23S rRNA. The polypeptide is Large ribosomal subunit protein bL9 (Lactobacillus delbrueckii subsp. bulgaricus (strain ATCC 11842 / DSM 20081 / BCRC 10696 / JCM 1002 / NBRC 13953 / NCIMB 11778 / NCTC 12712 / WDCM 00102 / Lb 14)).